The sequence spans 1339 residues: Aldehyde oxidase 1 (1339 aa).

The region spanning 5-92 is the 2Fe-2S ferredoxin-type domain; the sequence is SELLFYVNGR…GAAVTTVEGI (88 aa). Residues Cys-44, Cys-49, Cys-52, and Cys-74 each contribute to the [2Fe-2S] cluster site. Gln-113 provides a ligand contact to Mo-molybdopterin. The [2Fe-2S] cluster site is built by Cys-114, Cys-117, Cys-149, and Cys-151. Cys-151 is a Mo-molybdopterin binding site. The region spanning 236-421 is the FAD-binding PCMH-type domain; sequence FGSDRMTWIS…ISVNIPYSRK (186 aa). Residues 264 to 271, Ala-345, Ser-354, His-358, Asp-367, and Leu-411 contribute to the FAD site; that span reads VVMGNTSV. Residues 807-808 and Met-1048 each bind Mo-molybdopterin; that span reads AF. Ser-1069 carries the post-translational modification Phosphoserine. Mo-molybdopterin is bound by residues 1089–1092, Gln-1204, and Leu-1269; that span reads GSVV. Residue Glu-1271 is the Proton acceptor; for azaheterocycle hydroxylase activity of the active site.

Belongs to the xanthine dehydrogenase family. Homodimer. [2Fe-2S] cluster serves as cofactor. The cofactor is FAD. Requires Mo-molybdopterin as cofactor. The N-terminus is blocked. As to expression, expressed at high levels in liver, lung and spleen. Also expressed in kindey, eye, testis, duodenum, esophagus and thymus (at protein level).

Its subcellular location is the cytoplasm. It carries out the reaction an aldehyde + O2 + H2O = a carboxylate + H2O2 + H(+). It catalyses the reaction retinal + O2 + H2O = retinoate + H2O2 + H(+). Its function is as follows. Oxidase with broad substrate specificity, oxidizing aromatic azaheterocycles, such as N1-methylnicotinamide, N-methylphthalazinium and phthalazine, as well as aldehydes, such as benzaldehyde, retinal, pyridoxal, and vanillin. Plays a key role in the metabolism of xenobiotics and drugs containing aromatic azaheterocyclic substituents. Is probably involved in the regulation of reactive oxygen species homeostasis. May be a prominent source of superoxide generation via the one-electron reduction of molecular oxygen. May also catalyze nitric oxide (NO) production via the reduction of nitrite to NO with NADH or aldehyde as electron donor. May play a role in adipogenesis. This Bos taurus (Bovine) protein is Aldehyde oxidase 1.